A 347-amino-acid chain; its full sequence is tRNA(Ile)-lysidine synthase (347 aa).

Position 27–32 (serine 27–serine 32) interacts with ATP. The disordered stretch occupies residues alanine 243–histidine 263.

The protein belongs to the tRNA(Ile)-lysidine synthase family.

It is found in the cytoplasm. It catalyses the reaction cytidine(34) in tRNA(Ile2) + L-lysine + ATP = lysidine(34) in tRNA(Ile2) + AMP + diphosphate + H(+). Its function is as follows. Ligates lysine onto the cytidine present at position 34 of the AUA codon-specific tRNA(Ile) that contains the anticodon CAU, in an ATP-dependent manner. Cytidine is converted to lysidine, thus changing the amino acid specificity of the tRNA from methionine to isoleucine. This Nitratidesulfovibrio vulgaris (strain ATCC 29579 / DSM 644 / CCUG 34227 / NCIMB 8303 / VKM B-1760 / Hildenborough) (Desulfovibrio vulgaris) protein is tRNA(Ile)-lysidine synthase.